Here is a 173-residue protein sequence, read N- to C-terminus: Large ribosomal subunit protein bL9 (173 aa).

The segment at Y151–E173 is disordered.

It belongs to the bacterial ribosomal protein bL9 family.

Its function is as follows. Binds to the 23S rRNA. The protein is Large ribosomal subunit protein bL9 of Lawsonia intracellularis (strain PHE/MN1-00).